The sequence spans 349 residues: NAC domain-containing protein JA2 (349 aa).

In terms of domain architecture, NAC spans 14 to 163 (LPPGFRFYPT…EWVLCRIYKK (150 aa)). The DNA-binding element occupies 111–169 (VGIKKALVFYVGKAPKGSKTNWIMHEYRLFESSRKNNGSSKLDEWVLCRIYKKNSSGPK). The interval 169–194 (KPLMSGLHSSNEYSHGSSTSSSSQFD) is disordered. A compositionally biased stretch (low complexity) spans 177–191 (SSNEYSHGSSTSSSS).

In terms of tissue distribution, expressed in guard cells of the epidermis.

It is found in the nucleus. In terms of biological role, transcription factor involved in abscisic acid-mediated stomatal closure. Regulates the expression of NCED1, a gene involved in the biosynthesis of abscisic acid (ABA). Required for the stomatal closure induced by the bacterial pathogen Pseudomonas syringae pv tomato DC3000, but not for stomatal reopening. In Solanum lycopersicum (Tomato), this protein is NAC domain-containing protein JA2.